We begin with the raw amino-acid sequence, 172 residues long: Ribosome maturation factor RimM (172 aa).

The PRC barrel domain occupies 95–168 (AEGEFYYHQI…RVDVEIMEGL (74 aa)).

This sequence belongs to the RimM family. As to quaternary structure, binds ribosomal protein uS19.

Its subcellular location is the cytoplasm. An accessory protein needed during the final step in the assembly of 30S ribosomal subunit, possibly for assembly of the head region. Essential for efficient processing of 16S rRNA. May be needed both before and after RbfA during the maturation of 16S rRNA. It has affinity for free ribosomal 30S subunits but not for 70S ribosomes. This Streptococcus equi subsp. zooepidemicus (strain H70) protein is Ribosome maturation factor RimM.